Consider the following 173-residue polypeptide: PTS system glucose-specific EIIA component (173 aa).

The 105-residue stretch at 40-144 (DPTFAQKMMG…STVTPVVVTN (105 aa)) folds into the PTS EIIA type-1 domain. His77 and His92 together coordinate Zn(2+). Residue His92 is the Tele-phosphohistidine intermediate; for EIIA activity of the active site. A Phosphohistidine; by HPr modification is found at His92.

In terms of assembly, heterodimer with glycerol kinase (glpk). The cofactor is Zn(2+).

It is found in the cytoplasm. The phosphoenolpyruvate-dependent sugar phosphotransferase system (sugar PTS), a major carbohydrate active transport system, catalyzes the phosphorylation of incoming sugar substrates concomitantly with their translocation across the cell membrane. The enzyme II complex composed of PtsG and Crr is involved in glucose transport. The chain is PTS system glucose-specific EIIA component (crr) from Halalkalibacterium halodurans (strain ATCC BAA-125 / DSM 18197 / FERM 7344 / JCM 9153 / C-125) (Bacillus halodurans).